The following is a 37-amino-acid chain: Cytochrome b6-f complex subunit 5 (37 aa).

The helical transmembrane segment at isoleucine 5–alanine 25 threads the bilayer.

The protein belongs to the PetG family. In terms of assembly, the 4 large subunits of the cytochrome b6-f complex are cytochrome b6, subunit IV (17 kDa polypeptide, PetD), cytochrome f and the Rieske protein, while the 4 small subunits are PetG, PetL, PetM and PetN. The complex functions as a dimer.

The protein resides in the cellular thylakoid membrane. Functionally, component of the cytochrome b6-f complex, which mediates electron transfer between photosystem II (PSII) and photosystem I (PSI), cyclic electron flow around PSI, and state transitions. PetG is required for either the stability or assembly of the cytochrome b6-f complex. The protein is Cytochrome b6-f complex subunit 5 of Synechococcus sp. (strain JA-3-3Ab) (Cyanobacteria bacterium Yellowstone A-Prime).